Here is a 134-residue protein sequence, read N- to C-terminus: Rhoptry antigen protein (134 aa).

Disordered regions lie at residues 21–82 and 96–134; these read MGPL…SNLK and QLDK…ENEL. Positions 29–38 are enriched in polar residues; it reads KSTSAASTSD. The span at 39-54 shows a compositional bias: low complexity; it reads ELSGSEGPSTESTSTG. Residues 57 to 69 are compositionally biased toward basic and acidic residues; the sequence is GEDKTTDNTYKEM. Basic residues predominate over residues 102–113; the sequence is PKKKKSKRKKKR. Residues 114–126 are compositionally biased toward basic and acidic residues; sequence DSSSDRILLEESK.

The protein is Rhoptry antigen protein of Plasmodium falciparum.